The sequence spans 2146 residues: Conidial pigment polyketide synthase alb1 (2146 aa).

The N-terminal acylcarrier protein transacylase domain (SAT) stretch occupies residues 8-244 (YLFGDQTISC…KAPGVSGPYH (237 aa)). Positions 375 to 806 (RSKIAIIGMS…GGNTALLMED (432 aa)) constitute a Ketosynthase family 3 (KS3) domain. Catalysis depends on for beta-ketoacyl synthase activity residues C547, H682, and H724. The interval 911–1232 (GFVFTGQGAQ…LSTLHLAGVE (322 aa)) is malonyl-CoA:ACP transacylase (MAT) domain. S1001 (for acyl/malonyl transferase activity) is an active-site residue. The segment at 1290 to 1602 (TTAAQKIVEC…ARKILDTVLP (313 aa)) is product template (PT) domain. Residues 1294–1427 (QKIVECREDG…VKLFNCAERE (134 aa)) form an N-terminal hotdog fold region. In terms of domain architecture, PKS/mFAS DH spans 1294-1598 (QKIVECREDG…FQALARKILD (305 aa)). Catalysis depends on H1326, which acts as the Proton acceptor; for dehydratase activity. The C-terminal hotdog fold stretch occupies residues 1453–1598 (AHRMQRGMVY…FQALARKILD (146 aa)). D1511 acts as the Proton donor; for dehydratase activity in catalysis. The tract at residues 1611–1644 (GAPAPAPARPIGEKKAPPPIKVTGPPKPNPSNAR) is disordered. Over residues 1627–1639 (PPPIKVTGPPKPN) the composition is skewed to pro residues. In terms of domain architecture, Carrier 1 spans 1647 to 1721 (SPVVARALEI…DFKAYLAEKG (75 aa)). Position 1681 is an O-(pantetheine 4'-phosphoryl)serine (S1681). The tract at residues 1724-1769 (DSSSPEPSSEPESKFSFNSDASSEASSGLTTPGITSPVKHEAPKGG) is disordered. Residues 1738 to 1750 (FSFNSDASSEASS) show a composition bias toward low complexity. One can recognise a Carrier 2 domain in the interval 1768-1845 (GGQNKVWKSI…AVQAALDLKP (78 aa)). An O-(pantetheine 4'-phosphoryl)serine modification is found at S1805. The tract at residues 1892–2019 (KLFMFPDGSG…SIGLFGDGKR (128 aa)) is claisen cyclase domain. S1962 serves as the catalytic For Claisen cyclase activity.

It localises to the endosome. The catalysed reaction is 6 malonyl-CoA + acetyl-CoA + 6 H(+) = naphtopyrone YWA1 + 6 CO2 + 7 CoA + H2O. Its pathway is pigment biosynthesis; melanin biosynthesis. In terms of biological role, non-reducing polyketide synthase; part of the gene cluster that mediates the biosynthesis of dihydroxynaphthalene (DHN)-melanin, a bluish-green pigment and a structural component of the conidial wall. The first step of the pathway is the production of the heptaketide naphtopyrone YWA1 by the polyketide synthase alb1 though condensation of acetyl-CoA with malonyl-CoA. The naphtopyrone YWA1 is then converted to the pentaketide 1,3,6,8-tetrahydroxynaphthalene (1,3,6,8-THN) by the heptaketide hydrolyase ayg1 though chain-length shortening. 1,3,6,8-THN is substrate of the hydroxynaphthalene reductase arp2 to yield scytalone. The scytalone dehydratase arp1 then reduces scytalone to 1,3,8-THN. 1,3,8-THN is also substrate of the hydroxynaphthalene reductase arp2 to yield vermelone. Vermelone is further converted by the multicopper oxidase abr1 to 1,8-DHN. Finally the laccase abr2 transforms 1,8-DHN to DHN-melanin. DHN-melanin biosynthesis appears to be initiated in endosomes where early enzymes (abl1, ayg1, arp1 and arp2) localize, with exocytosis leading to melanin deposition on the cell surface where late enzymes (abr1 and abr2) localize. DHN-melanin is an important structural component of the outer cell wall and is required for the presence of conidial surface hydrophobins. DHN-melanin also plays a crucial role in fungal virulence, including a protective role against the host's immune defenses. DHN-melanin protects also conidia against amoeba predation. The chain is Conidial pigment polyketide synthase alb1 from Aspergillus fumigatus (strain ATCC MYA-4609 / CBS 101355 / FGSC A1100 / Af293) (Neosartorya fumigata).